Consider the following 458-residue polypeptide: Argininosuccinate lyase (458 aa).

This sequence belongs to the lyase 1 family. Argininosuccinate lyase subfamily.

The protein localises to the cytoplasm. It carries out the reaction 2-(N(omega)-L-arginino)succinate = fumarate + L-arginine. The protein operates within amino-acid biosynthesis; L-arginine biosynthesis; L-arginine from L-ornithine and carbamoyl phosphate: step 3/3. The polypeptide is Argininosuccinate lyase (Geotalea daltonii (strain DSM 22248 / JCM 15807 / FRC-32) (Geobacter daltonii)).